The chain runs to 698 residues: Polyribonucleotide nucleotidyltransferase (698 aa).

The Mg(2+) site is built by aspartate 490 and aspartate 496. A KH domain is found at 557–616; the sequence is PKVVTMTIKPDKIRDVIGPGGKKINEIIDETGVKLDIEQDGTIFIGAVDQAMINRAREII. Residues 626-694 enclose the S1 motif domain; it reads GQTYQATVKR…KQGRVNASHR (69 aa).

It belongs to the polyribonucleotide nucleotidyltransferase family. Mg(2+) is required as a cofactor.

Its subcellular location is the cytoplasm. It catalyses the reaction RNA(n+1) + phosphate = RNA(n) + a ribonucleoside 5'-diphosphate. In terms of biological role, involved in mRNA degradation. Catalyzes the phosphorolysis of single-stranded polyribonucleotides processively in the 3'- to 5'-direction. The polypeptide is Polyribonucleotide nucleotidyltransferase (Staphylococcus aureus (strain Mu3 / ATCC 700698)).